We begin with the raw amino-acid sequence, 362 residues long: Heat-inducible transcription repressor HrcA (362 aa).

The protein belongs to the HrcA family.

Negative regulator of class I heat shock genes (grpE-dnaK-dnaJ and groELS operons). Prevents heat-shock induction of these operons. The polypeptide is Heat-inducible transcription repressor HrcA (Rhizobium leguminosarum bv. trifolii (strain WSM2304)).